The chain runs to 460 residues: tRNA modification GTPase MnmE (460 aa).

Residues Arg29, Glu91, and Lys132 each coordinate (6S)-5-formyl-5,6,7,8-tetrahydrofolate. Positions 227–383 constitute a TrmE-type G domain; the sequence is GISIALIGKT…LIDTIIKKCG (157 aa). Asn237 contacts K(+). GTP is bound by residues 237 to 242, 256 to 262, and 281 to 284; these read NVGKSS, TNIPGTT, and DTAG. Residue Ser241 participates in Mg(2+) binding. Positions 256, 258, and 261 each coordinate K(+). Thr262 is a Mg(2+) binding site. Lys460 is a binding site for (6S)-5-formyl-5,6,7,8-tetrahydrofolate.

Belongs to the TRAFAC class TrmE-Era-EngA-EngB-Septin-like GTPase superfamily. TrmE GTPase family. As to quaternary structure, homodimer. Heterotetramer of two MnmE and two MnmG subunits. K(+) serves as cofactor.

It is found in the cytoplasm. Functionally, exhibits a very high intrinsic GTPase hydrolysis rate. Involved in the addition of a carboxymethylaminomethyl (cmnm) group at the wobble position (U34) of certain tRNAs, forming tRNA-cmnm(5)s(2)U34. In Prochlorococcus marinus (strain MIT 9312), this protein is tRNA modification GTPase MnmE.